Consider the following 465-residue polypeptide: Hepatocyte nuclear factor 6 (465 aa).

2 disordered regions span residues 15–84 (GVSH…GPLH) and 119–141 (SDKFPHHHHHHHHHHHPHHHQRL). Over residues 123-140 (PHHHHHHHHHHHPHHHQR) the composition is skewed to basic residues. Residues 283–369 (GSNSGQMEEI…QRMSALRLAA (87 aa)) constitute a DNA-binding region (CUT). The segment at residues 385–444 (PKKPRLVFTDVQRRTLHAIFKENKRPSKELQITISQQLGLELSTVSNFFMNARRRSLDKW) is a DNA-binding region (homeobox). Positions 442–465 (DKWQDEGSSNSGNSSSSSSTCTKA) are disordered. The span at 448 to 465 (GSSNSGNSSSSSSTCTKA) shows a compositional bias: low complexity.

This sequence belongs to the CUT homeobox family. In terms of assembly, binds DNA as a monomer. Expressed in liver, brain, spleen and testis.

The protein localises to the nucleus. Its function is as follows. Transcriptional activator. Binds the consensus sequence 5'-DHWATTGAYTWWD-3' on a variety of gene promoters such as those of HNF3B and TTR. Important for liver genes transcription. The affinity of HNF-6-alpha and HNF-6-beta for DNA differs depending on the target sequence. In Rattus norvegicus (Rat), this protein is Hepatocyte nuclear factor 6 (Onecut1).